Reading from the N-terminus, the 501-residue chain is Histone deacetylase 19 (501 aa).

The segment at 17–329 (RKVCYFYDPE…WCYETGVALG (313 aa)) is histone deacetylase. His-149 serves as the catalytic Proton donor/acceptor. Zn(2+) contacts are provided by Asp-184, His-186, and Asp-272. A disordered region spans residues 383 to 501 (HAPSVPFQER…GAEQAFPPKT (119 aa)). Positions 397–407 (ETPEVDEDQED) are enriched in acidic residues. Position 416 is a phosphoserine (Ser-416). Composition is skewed to basic and acidic residues over residues 422–457 (DDRK…KGCE) and 479–488 (ASVKMEEEGT).

The protein belongs to the histone deacetylase family. HD type 1 subfamily. In terms of assembly, interacts with SIN3, SAP18 and TPR1. Interacts with CDKE-1, MED14 and LUG. Interacts with TPL. Interacts with AHL22. It depends on Zn(2+) as a cofactor. Highly expressed in leaves, stems, flowers and young siliques.

It is found in the nucleus. The enzyme catalyses N(6)-acetyl-L-lysyl-[histone] + H2O = L-lysyl-[histone] + acetate. In terms of biological role, responsible for the deacetylation of lysine residues on the N-terminal part of the core histones (H2A, H2B, H3 and H4). Histone deacetylation gives a tag for epigenetic repression and plays an important role in transcriptional regulation, cell cycle progression and developmental events. Histone deacetylases act via the formation of large multiprotein complexes. HDA19 is involved in jasmonic acid and ethylene signaling of pathogen response. Part of a repressor complex including APETALA2 (AP2) and TOPLESS (TPL) that control the expression domains of numerous floral organ identity genes. Involved in negative regulation of salinity stress response. Represses the expression of stress tolerance-related genes, genes coding for late embryogenesis abundant (LEA) proteins that prevent protein aggregation, and positive regulators of abscisic acid (ABA) signaling, such as ABI5 and NAC019. The sequence is that of Histone deacetylase 19 from Arabidopsis thaliana (Mouse-ear cress).